Reading from the N-terminus, the 382-residue chain is 8-amino-7-oxononanoate synthase (382 aa).

Arg26 contacts substrate. 104-105 is a pyridoxal 5'-phosphate binding site; sequence GY. Substrate is bound at residue His129. Residues Ser175, 200 to 203, and 232 to 235 each bind pyridoxal 5'-phosphate; these read DEAH and TLSK. Lys235 carries the post-translational modification N6-(pyridoxal phosphate)lysine. Thr345 contacts substrate.

This sequence belongs to the class-II pyridoxal-phosphate-dependent aminotransferase family. BioF subfamily. In terms of assembly, homodimer. Requires pyridoxal 5'-phosphate as cofactor.

It catalyses the reaction 6-carboxyhexanoyl-[ACP] + L-alanine + H(+) = (8S)-8-amino-7-oxononanoate + holo-[ACP] + CO2. Its pathway is cofactor biosynthesis; biotin biosynthesis. In terms of biological role, catalyzes the decarboxylative condensation of pimeloyl-[acyl-carrier protein] and L-alanine to produce 8-amino-7-oxononanoate (AON), [acyl-carrier protein], and carbon dioxide. The protein is 8-amino-7-oxononanoate synthase of Mycobacterium sp. (strain JLS).